The following is a 570-amino-acid chain: Urease subunit alpha (570 aa).

The region spanning 135–570 (GGLDIHIHFN…ELPLAKRYSL (436 aa)) is the Urease domain. The Ni(2+) site is built by H140, H142, and K219. Residue K219 is modified to N6-carboxylysine. Residue H221 coordinates substrate. Ni(2+) is bound by residues H248 and H274. The Proton donor role is filled by H322. D362 contributes to the Ni(2+) binding site.

This sequence belongs to the metallo-dependent hydrolases superfamily. Urease alpha subunit family. Heterotrimer of UreA (gamma), UreB (beta) and UreC (alpha) subunits. Three heterotrimers associate to form the active enzyme. Ni cation is required as a cofactor. Carboxylation allows a single lysine to coordinate two nickel ions.

It localises to the cytoplasm. It catalyses the reaction urea + 2 H2O + H(+) = hydrogencarbonate + 2 NH4(+). It functions in the pathway nitrogen metabolism; urea degradation; CO(2) and NH(3) from urea (urease route): step 1/1. In Haloquadratum walsbyi (strain DSM 16790 / HBSQ001), this protein is Urease subunit alpha.